Consider the following 174-residue polypeptide: NADH-quinone oxidoreductase subunit I (174 aa).

4Fe-4S ferredoxin-type domains lie at 44–74 (LNRY…VEGD) and 90–119 (RVYQ…MTND). [4Fe-4S] cluster contacts are provided by Cys54, Cys57, Cys60, Cys64, Cys99, Cys102, Cys105, and Cys109.

Belongs to the complex I 23 kDa subunit family. In terms of assembly, NDH-1 is composed of 14 different subunits. Subunits NuoA, H, J, K, L, M, N constitute the membrane sector of the complex. It depends on [4Fe-4S] cluster as a cofactor.

It is found in the cell membrane. It catalyses the reaction a quinone + NADH + 5 H(+)(in) = a quinol + NAD(+) + 4 H(+)(out). Its function is as follows. NDH-1 shuttles electrons from NADH, via FMN and iron-sulfur (Fe-S) centers, to quinones in the respiratory chain. The immediate electron acceptor for the enzyme in this species is believed to be menaquinone. Couples the redox reaction to proton translocation (for every two electrons transferred, four hydrogen ions are translocated across the cytoplasmic membrane), and thus conserves the redox energy in a proton gradient. In Mycobacterium sp. (strain KMS), this protein is NADH-quinone oxidoreductase subunit I.